The primary structure comprises 299 residues: Coenzyme PQQ synthesis protein B (299 aa).

This sequence belongs to the PqqB family.

Its pathway is cofactor biosynthesis; pyrroloquinoline quinone biosynthesis. May be involved in the transport of PQQ or its precursor to the periplasm. The chain is Coenzyme PQQ synthesis protein B from Methylorubrum extorquens (strain CM4 / NCIMB 13688) (Methylobacterium extorquens).